The primary structure comprises 139 residues: D-ribose pyranase (139 aa).

Histidine 20 functions as the Proton donor in the catalytic mechanism. Substrate-binding positions include aspartate 28, histidine 106, and 128–130 (YAN).

Belongs to the RbsD / FucU family. RbsD subfamily. As to quaternary structure, homodecamer.

The protein resides in the cytoplasm. It catalyses the reaction beta-D-ribopyranose = beta-D-ribofuranose. The protein operates within carbohydrate metabolism; D-ribose degradation; D-ribose 5-phosphate from beta-D-ribopyranose: step 1/2. In terms of biological role, catalyzes the interconversion of beta-pyran and beta-furan forms of D-ribose. In Aeromonas hydrophila subsp. hydrophila (strain ATCC 7966 / DSM 30187 / BCRC 13018 / CCUG 14551 / JCM 1027 / KCTC 2358 / NCIMB 9240 / NCTC 8049), this protein is D-ribose pyranase.